Consider the following 707-residue polypeptide: Leukotoxin export ATP-binding protein LtxB (707 aa).

The region spanning 4–125 is the Peptidase C39 domain; that stretch reads QKNTNLALQA…ERYQSKVILI (122 aa). H83 is a catalytic residue. Helical transmembrane passes span 158-178, 191-211, 269-289, 295-315, and 387-407; these read LIVS…FQVV, LNVI…LGGL, ALTS…MWYY, LVVL…SPIL, and AVMV…DLSI. The ABC transmembrane type-1 domain maps to 158-436; that stretch reads LIVSIFLQIF…LAQIWQDFQQ (279 aa). Residues 468–703 form the ABC transporter domain; it reads ISFRNIKFRY…EKGLYSYLHQ (236 aa). 502-509 is an ATP binding site; it reads GRSGSGKS.

The protein belongs to the ABC transporter superfamily. Protein-1 exporter (TC 3.A.1.109) family. Probably part of a complex composed of LtxB, LtxD and TdeA, which forms a single transport channel across the two membranes.

It localises to the cell inner membrane. The enzyme catalyses ATP + H2O + proteinSide 1 = ADP + phosphate + proteinSide 2.. Functionally, involved in the export of the LtxA leukotoxin. The sequence is that of Leukotoxin export ATP-binding protein LtxB from Aggregatibacter actinomycetemcomitans (Actinobacillus actinomycetemcomitans).